The chain runs to 441 residues: Protein dcd1A (441 aa).

The first 23 residues, 1 to 23 (MKIFNKLIFLIIQCILIISVTNA), serve as a signal peptide directing secretion. N-linked (GlcNAc...) asparagine glycosylation is found at N45, N261, N308, and N419.

Its subcellular location is the secreted. In Dictyostelium discoideum (Social amoeba), this protein is Protein dcd1A (dcd1A).